We begin with the raw amino-acid sequence, 151 residues long: Lipoprotein signal peptidase (151 aa).

2 consecutive transmembrane segments (helical) span residues 54–74 and 83–103; these read GQMW…IYLI and LLKI…IDRL. Residues D110 and D125 contribute to the active site. A helical membrane pass occupies residues 120–140; the sequence is IFNIADSALTIGVGLFLLNIL.

This sequence belongs to the peptidase A8 family.

It localises to the cell membrane. The catalysed reaction is Release of signal peptides from bacterial membrane prolipoproteins. Hydrolyzes -Xaa-Yaa-Zaa-|-(S,diacylglyceryl)Cys-, in which Xaa is hydrophobic (preferably Leu), and Yaa (Ala or Ser) and Zaa (Gly or Ala) have small, neutral side chains.. Its pathway is protein modification; lipoprotein biosynthesis (signal peptide cleavage). Its function is as follows. This protein specifically catalyzes the removal of signal peptides from prolipoproteins. The polypeptide is Lipoprotein signal peptidase (Shouchella clausii (strain KSM-K16) (Alkalihalobacillus clausii)).